The following is a 121-amino-acid chain: Large ribosomal subunit protein bL19 (121 aa).

The protein belongs to the bacterial ribosomal protein bL19 family.

Its function is as follows. This protein is located at the 30S-50S ribosomal subunit interface and may play a role in the structure and function of the aminoacyl-tRNA binding site. The polypeptide is Large ribosomal subunit protein bL19 (Polaromonas sp. (strain JS666 / ATCC BAA-500)).